A 334-amino-acid chain; its full sequence is Protein NlpD/LppB homolog (334 aa).

The region spanning 89–133 (IFYIVKSKDTMYSIAKNSGYNYHELSKFNSIKKPYKIIIGQKIWM) is the LysM domain.

Belongs to the E.coli NlpD/Haemophilus LppB family.

The polypeptide is Protein NlpD/LppB homolog (Buchnera aphidicola subsp. Acyrthosiphon pisum (strain APS) (Acyrthosiphon pisum symbiotic bacterium)).